We begin with the raw amino-acid sequence, 65 residues long: Large ribosomal subunit protein bL35 (65 aa).

Composition is skewed to basic residues over residues 1 to 15 (MPKMKTKKSASKRFT) and 26 to 44 (QAFKRHILTKKTTKNKRQL). Positions 1–65 (MPKMKTKKSA…KSVRAMMPYA (65 aa)) are disordered.

The protein belongs to the bacterial ribosomal protein bL35 family.

This chain is Large ribosomal subunit protein bL35, found in Ralstonia nicotianae (strain ATCC BAA-1114 / GMI1000) (Ralstonia solanacearum).